The primary structure comprises 182 residues: Homeobox expressed in ES cells 1-A (182 aa).

The segment at residues 103 to 163 (YRGRRPRTAF…QNRRAKLKRS (61 aa)) is a DNA-binding region (homeobox).

It belongs to the ANF homeobox family. Initially expressed in the anterior dorsal region of early embryos and later exclusively in the primordium of the anterior pituitary gland.

The protein resides in the nucleus. Appears to be involved in the regional specification of the anterior head of Xenopus embryos. The protein is Homeobox expressed in ES cells 1-A (hesx1-a) of Xenopus laevis (African clawed frog).